An 884-amino-acid chain; its full sequence is MNIPTKFTTSKIRSDFLEFFKNKGHKIVPSAPLVPGNDPTLLFTNSGMVQFKDVFLGAEKRSEVRVADVQCCLRAGGKHNDLDSVGYTARHHTFFEMLGNWSFGDYFKKEAITWAWELLTHVWELPPERLLVTVYRTDDESYALWRDMVGVPEDRIVRIGDNKGAPFASDNFWQMADTGPCGPCTEIFYDHGEHIPGGPPGSPGEDGDRFIEIWNLVFMQFDRQSDGTLVPLPTPCVDTGMGLERLAAILQHVHTNYEIDLFQTLILKAAELTAVADVQNKSLCVIADHSRACAFLIVDGVLPSNEGRGYVLRRIIRRALRHGWMLGVRQPFFNNMVPTLVAVMGDAYPKLQAAAESVMRTLLAEEERFAETLDVGMKIFNEVAAKVANGVIPGSDAFRLYDTYGFPVDLTADIARERGMRVDMAGFEAAMTQQRKTARAAGKFGRGVQLSAERAAMLSPTVFLGYEQLQADGLRVVALLSDGGLTDSASVGDEVIVLTDRTPFYAESGGQVGDIGTLMASDGVRLEVTDTQKLMGQFHGHVTRIVQGGVKVGDVLSGSVAVARRKMVALNHSATHLLHCALRSVFGTHVAQKGSLVAPDRLRFDFSHFEPISAAQMTLIERMVNDEVRANHLVMIEQMGMQAALDAGAMALFGEKYGEHVRVVKMGTSVELCGGTHITRTGDIGLFKIISECGVSSGVRRIEAVTGESALNHVLAEEHRLYEVAGLIGSNANDVVNHIRQLTDRQKTLERELEKLKGKLISGTITDLLSTAVNVADVKVVAARLDGLDGKALREALDRLKLQLSDAVIVLAGVTGGKVALVTAVNGPRAMGKVKADTLLSHVATQINGRGGGRVDFAQGGGEDGPSLRSALDGVATWVKQHLD.

Positions 572, 576, 673, and 677 each coordinate Zn(2+).

Belongs to the class-II aminoacyl-tRNA synthetase family. Requires Zn(2+) as cofactor.

Its subcellular location is the cytoplasm. The enzyme catalyses tRNA(Ala) + L-alanine + ATP = L-alanyl-tRNA(Ala) + AMP + diphosphate. Catalyzes the attachment of alanine to tRNA(Ala) in a two-step reaction: alanine is first activated by ATP to form Ala-AMP and then transferred to the acceptor end of tRNA(Ala). Also edits incorrectly charged Ser-tRNA(Ala) and Gly-tRNA(Ala) via its editing domain. In Xylella fastidiosa (strain M12), this protein is Alanine--tRNA ligase.